Here is a 262-residue protein sequence, read N- to C-terminus: Indole-3-glycerol phosphate synthase (262 aa).

It belongs to the TrpC family.

The catalysed reaction is 1-(2-carboxyphenylamino)-1-deoxy-D-ribulose 5-phosphate + H(+) = (1S,2R)-1-C-(indol-3-yl)glycerol 3-phosphate + CO2 + H2O. Its pathway is amino-acid biosynthesis; L-tryptophan biosynthesis; L-tryptophan from chorismate: step 4/5. This is Indole-3-glycerol phosphate synthase from Aromatoleum aromaticum (strain DSM 19018 / LMG 30748 / EbN1) (Azoarcus sp. (strain EbN1)).